A 307-amino-acid polypeptide reads, in one-letter code: 1D-myo-inositol 2-acetamido-2-deoxy-alpha-D-glucopyranoside deacetylase 1 (307 aa).

His-21, Asp-24, and His-157 together coordinate Zn(2+).

Belongs to the MshB deacetylase family. Zn(2+) is required as a cofactor.

It catalyses the reaction 1D-myo-inositol 2-acetamido-2-deoxy-alpha-D-glucopyranoside + H2O = 1D-myo-inositol 2-amino-2-deoxy-alpha-D-glucopyranoside + acetate. Catalyzes the deacetylation of 1D-myo-inositol 2-acetamido-2-deoxy-alpha-D-glucopyranoside (GlcNAc-Ins) in the mycothiol biosynthesis pathway. The polypeptide is 1D-myo-inositol 2-acetamido-2-deoxy-alpha-D-glucopyranoside deacetylase 1 (Frankia casuarinae (strain DSM 45818 / CECT 9043 / HFP020203 / CcI3)).